Reading from the N-terminus, the 244-residue chain is Dirigent protein 18 (244 aa).

A signal peptide spans 1 to 25 (MMKQSPFSLLTSIFLIAALFTATTA).

This sequence belongs to the plant dirigent protein family. As to quaternary structure, homodimer.

It is found in the secreted. The protein localises to the extracellular space. Its subcellular location is the apoplast. Functionally, dirigent proteins impart stereoselectivity on the phenoxy radical-coupling reaction, yielding optically active lignans from two molecules of coniferyl alcohol in the biosynthesis of lignans, flavonolignans, and alkaloids and thus plays a central role in plant secondary metabolism. This is Dirigent protein 18 (DIR18) from Arabidopsis thaliana (Mouse-ear cress).